The primary structure comprises 147 residues: Hemoglobin subunit gamma-1 (147 aa).

Glycine 2 bears the N-acetylglycine mark. In terms of domain architecture, Globin spans 3 to 147; that stretch reads HFTEEDKATI…VASALSSRYH (145 aa). Phosphothreonine is present on threonine 13. Serine 45, serine 51, and serine 53 each carry phosphoserine. Lysine 60 is subject to N6-acetyllysine. Residue histidine 64 participates in heme b binding. Lysine 83 carries the post-translational modification N6-acetyllysine. Histidine 93 serves as a coordination point for heme b. Cysteine 94 bears the S-nitrosocysteine mark. Residue serine 140 is modified to Phosphoserine.

This sequence belongs to the globin family. As to quaternary structure, heterotetramer of two alpha chains and two gamma chains in fetal hemoglobin (Hb F). As to expression, red blood cells.

Its function is as follows. Gamma chains make up the fetal hemoglobin F, in combination with alpha chains. This is Hemoglobin subunit gamma-1 (HBG1) from Gorilla gorilla gorilla (Western lowland gorilla).